Reading from the N-terminus, the 277-residue chain is Diaminopimelate epimerase (277 aa).

Residues asparagine 15 and asparagine 74 each contribute to the substrate site. The active-site Proton donor is cysteine 83. Substrate-binding positions include 84–85, asparagine 159, asparagine 194, and 212–213; these read GN and ER. Cysteine 221 serves as the catalytic Proton acceptor. Residue 222–223 coordinates substrate; the sequence is GT.

Belongs to the diaminopimelate epimerase family. As to quaternary structure, homodimer.

It localises to the cytoplasm. It carries out the reaction (2S,6S)-2,6-diaminopimelate = meso-2,6-diaminopimelate. It functions in the pathway amino-acid biosynthesis; L-lysine biosynthesis via DAP pathway; DL-2,6-diaminopimelate from LL-2,6-diaminopimelate: step 1/1. Functionally, catalyzes the stereoinversion of LL-2,6-diaminopimelate (L,L-DAP) to meso-diaminopimelate (meso-DAP), a precursor of L-lysine and an essential component of the bacterial peptidoglycan. Involved in the succinylase branch of the diaminopimelate biosynthesis. This Corynebacterium glutamicum (strain ATCC 13032 / DSM 20300 / JCM 1318 / BCRC 11384 / CCUG 27702 / LMG 3730 / NBRC 12168 / NCIMB 10025 / NRRL B-2784 / 534) protein is Diaminopimelate epimerase.